A 281-amino-acid polypeptide reads, in one-letter code: Putative glutamine amidotransferase-like protein RP404 (281 aa).

The 263-residue stretch at 19 to 281 (KYTYADFPWY…KALVKASKYI (263 aa)) folds into the Glutamine amidotransferase type-1 domain. Residues 139–174 (RHFSKLTYSKKFECNTEAFATTVYTLPIKLEFENAP) form the RPE1 insert domain.

The chain is Putative glutamine amidotransferase-like protein RP404 from Rickettsia prowazekii (strain Madrid E).